Consider the following 469-residue polypeptide: MVVDGKTTRLRASCNACNESKVRCSQRKPTCARCERNGVECIYGLSRRTHKDAPPISMPPSQRSHNHPRGASRSSSSGGDTKANSNSSSNWHMSPNVPFMIPPQQQQQQQKEEAAAAAAATPRFQCMYTPQDATADTVNRAGLLLDMDFSSLVTGSSSPLTSVDPLSAAVTRFPTPGAEHTNPWALGPFFGGNTNNNSINNPDWTRQPTTMGPMITVPTTAPPSPSPSCTECSCHAGVTELLSSMRGGGDDRRLSLDAQLAKLKRCIVSSETSMGCAHGRDDAEPIHILAVSTLIGYVIDEFEMLASESPLRLSSSLADMSGSRNAERVAESILSSGSDESMSMSSMAATTGVNNMSMSMSMGNLLEPRLSWGVLELEDDDEVDLRQRLYLLSFRKLERLLSQLTIYLRNLHDARAGLPEPSRHMAFVMACDYTRLWLEKKAEDVKRMFLVARPAGDETMDPALMFTAH.

The zn(2)-C6 fungal-type DNA-binding region spans Cys-14–Cys-41. Residues Thr-49 to Ala-118 form a disordered region. The segment covering Lys-82–Met-93 has biased composition (polar residues). Residues Gln-104–Ala-118 are compositionally biased toward low complexity.

It localises to the nucleus. Transcription factor; part of the gene cluster that mediates the biosynthesis of the phomopsins, a group of hexapeptide mycotoxins which infects lupins and causes lupinosis disease in livestock. May play a role in the regulation of the production of phomopsins. The polypeptide is Transcription factor phomD (Diaporthe leptostromiformis (Lupinosis disease fungus)).